Here is a 285-residue protein sequence, read N- to C-terminus: CCR4-NOT transcription complex subunit 7 (285 aa).

A divalent metal cation is bound by residues Asp-40, Glu-42, Asp-161, Asp-230, and Glu-278.

This sequence belongs to the CAF1 family. Component of the CCR4-NOT complex. Requires Mn(2+) as cofactor. The cofactor is Mg(2+). It depends on Co(2+) as a cofactor.

It is found in the nucleus. It localises to the cytoplasm. It carries out the reaction Exonucleolytic cleavage of poly(A) to 5'-AMP.. Functionally, has 3'-5' poly(A) exoribonuclease activity for synthetic poly(A) RNA substrate. Catalytic component of the CCR4-NOT complex which is one of the major cellular mRNA deadenylases and is linked to various cellular processes including bulk mRNA degradation, miRNA-mediated repression, translational repression during translational initiation and general transcription regulation. During miRNA-mediated repression the complex also seems to act as translational repressor during translational initiation. Additional complex functions may be a consequence of its influence on mRNA expression. The chain is CCR4-NOT transcription complex subunit 7 (cnot7) from Xenopus laevis (African clawed frog).